The following is a 403-amino-acid chain: Riboflavin biosynthesis protein RibBA (403 aa).

The segment at 1–204 is DHBP synthase; it reads MKNKVFASIG…IGELVNYRRR (204 aa). D-ribulose 5-phosphate is bound by residues 30-31, aspartate 35, 143-147, and glutamate 167; these read RE and RTGHT. Glutamate 31 contacts Mg(2+). Histidine 146 is a Mg(2+) binding site. The GTP cyclohydrolase II stretch occupies residues 205–403; the sequence is TEKFISEIVN…EKMGHMLKKV (199 aa). GTP is bound at residue 255–259; the sequence is RVHSS. Zn(2+) contacts are provided by cysteine 260, cysteine 271, and cysteine 273. GTP is bound by residues glutamine 276, 298–300, and threonine 320; that span reads EGR. Aspartate 332 functions as the Proton acceptor; for GTP cyclohydrolase activity in the catalytic mechanism. Arginine 334 (nucleophile; for GTP cyclohydrolase activity) is an active-site residue. Residues threonine 355 and lysine 360 each coordinate GTP.

This sequence in the N-terminal section; belongs to the DHBP synthase family. In the C-terminal section; belongs to the GTP cyclohydrolase II family. Mg(2+) serves as cofactor. It depends on Mn(2+) as a cofactor. Zn(2+) is required as a cofactor.

The enzyme catalyses D-ribulose 5-phosphate = (2S)-2-hydroxy-3-oxobutyl phosphate + formate + H(+). It carries out the reaction GTP + 4 H2O = 2,5-diamino-6-hydroxy-4-(5-phosphoribosylamino)-pyrimidine + formate + 2 phosphate + 3 H(+). It participates in cofactor biosynthesis; riboflavin biosynthesis; 2-hydroxy-3-oxobutyl phosphate from D-ribulose 5-phosphate: step 1/1. It functions in the pathway cofactor biosynthesis; riboflavin biosynthesis; 5-amino-6-(D-ribitylamino)uracil from GTP: step 1/4. Catalyzes the conversion of D-ribulose 5-phosphate to formate and 3,4-dihydroxy-2-butanone 4-phosphate. Its function is as follows. Catalyzes the conversion of GTP to 2,5-diamino-6-ribosylamino-4(3H)-pyrimidinone 5'-phosphate (DARP), formate and pyrophosphate. The chain is Riboflavin biosynthesis protein RibBA from Endomicrobium trichonymphae.